The primary structure comprises 636 residues: 1-deoxy-D-xylulose-5-phosphate synthase (636 aa).

Thiamine diphosphate is bound by residues His75 and 116–118 (AHS). Residue Asp147 participates in Mg(2+) binding. Thiamine diphosphate is bound by residues 148–149 (GA), Asn177, Tyr288, and Glu370. Residue Asn177 coordinates Mg(2+).

Belongs to the transketolase family. DXPS subfamily. As to quaternary structure, homodimer. Mg(2+) is required as a cofactor. The cofactor is thiamine diphosphate.

The catalysed reaction is D-glyceraldehyde 3-phosphate + pyruvate + H(+) = 1-deoxy-D-xylulose 5-phosphate + CO2. It participates in metabolic intermediate biosynthesis; 1-deoxy-D-xylulose 5-phosphate biosynthesis; 1-deoxy-D-xylulose 5-phosphate from D-glyceraldehyde 3-phosphate and pyruvate: step 1/1. Functionally, catalyzes the acyloin condensation reaction between C atoms 2 and 3 of pyruvate and glyceraldehyde 3-phosphate to yield 1-deoxy-D-xylulose-5-phosphate (DXP). The protein is 1-deoxy-D-xylulose-5-phosphate synthase of Ralstonia nicotianae (strain ATCC BAA-1114 / GMI1000) (Ralstonia solanacearum).